A 76-amino-acid chain; its full sequence is Signal recognition particle 9 kDa protein (76 aa).

It belongs to the SRP9 family. In terms of assembly, heterodimer with SRP14; binds RNA as heterodimer. Component of a signal recognition particle complex that consists of a 7SL RNA molecule of 300 nucleotides and six protein subunits: srpa-72, srpa-68, SRP54, F37F2.2/SRP19, F25G6.8/SRP14 and ZK512.4/SRP9.

It localises to the cytoplasm. Functionally, component of the signal recognition particle (SRP) complex, a ribonucleoprotein complex that mediates the cotranslational targeting of secretory and membrane proteins to the endoplasmic reticulum (ER). SRP9 together with SRP14 and the Alu portion of the SRP RNA, constitutes the elongation arrest domain of SRP. The complex of SRP9 and SRP14 is required for SRP RNA binding. The protein is Signal recognition particle 9 kDa protein of Caenorhabditis elegans.